A 352-amino-acid chain; its full sequence is Zinc transporter 1 (352 aa).

Residues 1 to 29 (MARTMTMRVSSLLVAVVLLAALSFQACSG) form the signal peptide. Over 30–56 (HGGINDGDGQVDAPATPASSSGVRSKG) the chain is Extracellular. Residues 57 to 77 (LIAVKVWCLVILLVFTFAGGV) form a helical membrane-spanning segment. The Cytoplasmic portion of the chain corresponds to 78 to 87 (SPYFYRWNES). The helical transmembrane segment at 88–108 (FLLLGTQFAAGVFLGTALMHF) threads the bilayer. The Extracellular segment spans residues 109–127 (LADSTSTFKGLTTNQYPFS). The chain crosses the membrane as a helical span at residues 128-148 (FMLTCVGFLLTMLSDLVIAAV). Over 149–200 (ARRSAAAGVSDNQVSEQQQRQQAEGAVMSRKEEEAAAVAHPAMLVRTSSFED) the chain is Cytoplasmic. Residues 201–221 (AVLLIVALCFHSVFEGIAIGV) traverse the membrane as a helical segment. Over 222–230 (SASKSEAWR) the chain is Extracellular. The helical transmembrane segment at 231–251 (NLWTIGLHKIFAAVAMGIALL) threads the bilayer. Over 252-262 (RMIPKRPFLMT) the chain is Cytoplasmic. A helical membrane pass occupies residues 263–283 (VVYSLAFAVSSPVGVGIGIAI). Over 284-296 (DATSQGRAADWTY) the chain is Extracellular. Residues 297 to 317 (AISMGLATGVFIYVAINHLIA) form a helical membrane-spanning segment. Residues 318 to 330 (KGYRPHHPTAADK) lie on the Cytoplasmic side of the membrane. The chain crosses the membrane as a helical span at residues 331–351 (PLFKFLAVLLGVAVMAVVMIW). Asp352 is a topological domain (extracellular).

It belongs to the ZIP transporter (TC 2.A.5) family. As to expression, expressed in vascular bundles of roots and leaves.

Its subcellular location is the cell membrane. Zinc transporter that may mediate zinc uptake from the rhizosphere. May also transport other divalent cations. The protein is Zinc transporter 1 (ZIP1) of Oryza sativa subsp. japonica (Rice).